The sequence spans 192 residues: uncharacterized protein (192 aa).

The region spanning glutamine 29–aspartate 160 is the Nudix hydrolase domain. Positions glycine 67–alanine 89 match the Nudix box motif. 2 residues coordinate Mg(2+): glutamate 83 and glutamate 87.

It belongs to the Nudix hydrolase family. PCD1 subfamily. The cofactor is Mn(2+). Requires Mg(2+) as cofactor.

Its function is as follows. Probably mediates the hydrolysis of some nucleoside diphosphate derivatives. This is an uncharacterized protein from Klebsiella pneumoniae (strain 342).